Reading from the N-terminus, the 564-residue chain is Arginine--tRNA ligase (564 aa).

The 'HIGH' region motif lies at 122–132 (PNIAKPFSIGH).

It belongs to the class-I aminoacyl-tRNA synthetase family. Monomer.

Its subcellular location is the cytoplasm. The enzyme catalyses tRNA(Arg) + L-arginine + ATP = L-arginyl-tRNA(Arg) + AMP + diphosphate. This is Arginine--tRNA ligase from Lactococcus lactis subsp. lactis (strain IL1403) (Streptococcus lactis).